The primary structure comprises 252 residues: 7-carboxy-7-deazaguanine synthase (252 aa).

Residues 22 to 24 and Arg37 each bind substrate; that span reads LQG. In terms of domain architecture, Radical SAM core spans 28–251; that stretch reads FVGEPQAFVR…QVHKLVDFIP (224 aa). Residues Cys41, Cys45, and Cys48 each contribute to the [4Fe-4S] cluster site. Thr102 is a substrate binding site. Gly104 lines the S-adenosyl-L-methionine pocket.

This sequence belongs to the radical SAM superfamily. 7-carboxy-7-deazaguanine synthase family. As to quaternary structure, homodimer. Requires [4Fe-4S] cluster as cofactor. S-adenosyl-L-methionine serves as cofactor. Mg(2+) is required as a cofactor.

The enzyme catalyses 6-carboxy-5,6,7,8-tetrahydropterin + H(+) = 7-carboxy-7-deazaguanine + NH4(+). Its pathway is purine metabolism; 7-cyano-7-deazaguanine biosynthesis. Catalyzes the complex heterocyclic radical-mediated conversion of 6-carboxy-5,6,7,8-tetrahydropterin (CPH4) to 7-carboxy-7-deazaguanine (CDG), a step common to the biosynthetic pathways of all 7-deazapurine-containing compounds. The polypeptide is 7-carboxy-7-deazaguanine synthase (Methanopyrus kandleri (strain AV19 / DSM 6324 / JCM 9639 / NBRC 100938)).